A 99-amino-acid chain; its full sequence is MALDLSDVKRIAHLARIETSDDEAAQTLAQLNNFFSLVEQMQAVDTTGIEPQAHPLSAVRDMVQRLREDVVTETDRRADYQRPAPATENGLYLVPKVIE.

Belongs to the GatC family. Heterotrimer of A, B and C subunits.

The catalysed reaction is L-glutamyl-tRNA(Gln) + L-glutamine + ATP + H2O = L-glutaminyl-tRNA(Gln) + L-glutamate + ADP + phosphate + H(+). It catalyses the reaction L-aspartyl-tRNA(Asn) + L-glutamine + ATP + H2O = L-asparaginyl-tRNA(Asn) + L-glutamate + ADP + phosphate + 2 H(+). Functionally, allows the formation of correctly charged Asn-tRNA(Asn) or Gln-tRNA(Gln) through the transamidation of misacylated Asp-tRNA(Asn) or Glu-tRNA(Gln) in organisms which lack either or both of asparaginyl-tRNA or glutaminyl-tRNA synthetases. The reaction takes place in the presence of glutamine and ATP through an activated phospho-Asp-tRNA(Asn) or phospho-Glu-tRNA(Gln). The protein is Aspartyl/glutamyl-tRNA(Asn/Gln) amidotransferase subunit C of Cupriavidus taiwanensis (strain DSM 17343 / BCRC 17206 / CCUG 44338 / CIP 107171 / LMG 19424 / R1) (Ralstonia taiwanensis (strain LMG 19424)).